The chain runs to 291 residues: Kidney mitochondrial carrier protein 1 (291 aa).

N-acetylserine is present on serine 2. 3 Solcar repeats span residues lysine 7–leucine 96, glutamate 104–histidine 189, and aspartate 198–leucine 289. Transmembrane regions (helical) follow at residues phenylalanine 9 to isoleucine 26, glycine 71 to threonine 89, threonine 105 to alanine 124, glycine 164 to tyrosine 183, phenylalanine 204 to valine 224, and glycine 264 to tyrosine 283.

This sequence belongs to the mitochondrial carrier (TC 2.A.29) family. Interacts with VDAC1.

It is found in the mitochondrion inner membrane. The enzyme catalyses sulfite(in) + sulfate(out) = sulfite(out) + sulfate(in). It catalyses the reaction thiosulfate(in) + sulfate(out) = thiosulfate(out) + sulfate(in). The catalysed reaction is sulfate(out) + phosphate(in) = sulfate(in) + phosphate(out). It carries out the reaction oxalate(in) + sulfate(out) = oxalate(out) + sulfate(in). The enzyme catalyses malonate(in) + sulfate(out) = malonate(out) + sulfate(in). It catalyses the reaction maleate(in) + sulfate(out) = maleate(out) + sulfate(in). The catalysed reaction is (S)-malate(in) + sulfate(out) = (S)-malate(out) + sulfate(in). It carries out the reaction (3S)-citramalate(in) + sulfate(out) = (3S)-citramalate(out) + sulfate(in). The enzyme catalyses (3R)-citramalate(in) + sulfate(out) = (3R)-citramalate(out) + sulfate(in). It catalyses the reaction sulfate(out) + succinate(in) = sulfate(in) + succinate(out). The catalysed reaction is (S,S)-tartrate(in) + sulfate(out) = (S,S)-tartrate(out) + sulfate(in). It carries out the reaction (2R,3R)-tartrate(in) + sulfate(out) = (2R,3R)-tartrate(out) + sulfate(in). The enzyme catalyses D-aspartate(in) + sulfate(out) = D-aspartate(out) + sulfate(in). It catalyses the reaction L-aspartate(in) + sulfate(out) = L-aspartate(out) + sulfate(in). The catalysed reaction is sulfate(in) = sulfate(out). It carries out the reaction phosphate(in) = phosphate(out). The enzyme catalyses (S)-malate(out) = (S)-malate(in). Increased activity at pH 6.0. sulfate/sulfate exchange activity is inhibited strongly by pyridoxal 5'-phosphate, bathophenanthroline and the organic mercurials mersalyl, p-chloromercuribenzoate and HgCl2. Functionally, antiporter that transports inorganic anions (sulfate, sulfite, thiosulfate and phosphate) and, to a lesser extent, a variety of dicarboxylates (e.g. malonate, malate and citramalate) and, even more so, aspartate. The sulfate/sulfate exchange is much higher than the phosphate/phosphate and malate/malate exchanges. The transport affinities is higher for sulfate and thiosulfate than for any other substrate. May catalyze the export of sulfite and thiosulfate (the hydrogen sulfide degradation products) from the mitochondria, thereby modulating the level of the hydrogen sulfide. Also may mediate a very low unidirectional transport of sulfate, phosphate and (S)-malate. This is Kidney mitochondrial carrier protein 1 from Homo sapiens (Human).